Reading from the N-terminus, the 2032-residue chain is Transient receptor potential channel (2032 aa).

A compositionally biased stretch (basic residues) spans 129 to 139 (KKTRKHRRRRS). Disordered stretches follow at residues 129 to 162 (KKTRKHRRRRSGSFTGGVYPRKGHRNRSLLGHAI), 197 to 223 (QSKGGDQVPPTSTTTGGAGGDGNAVPT), 831 to 860 (KKAMGVFSSRPSRTGSGIASRQSTEGMGGV), 912 to 945 (ANPMRPPNLGDSRDCGSEFDEELSLTSASDGSQT), and 1120 to 1211 (AAEH…EAGN). 3 stretches are compositionally biased toward polar residues: residues 839–855 (SRPSRTGSGIASRQSTE), 935–945 (SLTSASDGSQT), and 1120–1129 (AAEHQNDMNY). Over residues 1130–1149 (SSSSSSSSSSSSSSSSSDSS) the composition is skewed to low complexity. The span at 1171 to 1185 (TSQGSAQSLNITSLF) shows a compositional bias: polar residues. 5 consecutive transmembrane segments (helical) span residues 1310-1330 (FWSWTISFILFITFFTYTLLV), 1332-1352 (TPPRPTVIEYILIAYVAAFGL), 1374-1394 (VCSFWNCVTILAIIFYIVGFF), 1439-1459 (MIQNMSYIIVMLVVTLLSFGL), and 1535-1555 (LMTFFLLIANILLMSMLIAIF). Disordered regions lie at residues 1753 to 1779 (GTDPILEEKDHDSGENSNSLPPGRIRR), 1853 to 1909 (HPER…SRDQ), 1935 to 1982 (EEED…EEVD), and 1999 to 2032 (LNEEEQAGAPHSTPVIASPSSSRADLTSQKCSDV). Residues 1935 to 1947 (EEEDEEEDDEEDD) show a composition bias toward acidic residues. Over residues 1951-1962 (RHHIHPRRKSSR) the composition is skewed to basic residues. Polar residues predominate over residues 2016-2032 (SPSSSRADLTSQKCSDV).

The protein belongs to the transient receptor (TC 1.A.4) family. LTrpC subfamily. Gonads.

The protein resides in the membrane. Functionally, required for initiation and continuation of postembryonic mitotic cell divisions of gonadal cells Z1 and Z4. Zygotic expression is necessary for hermaphrodite fertility. May be a cation channel. The sequence is that of Transient receptor potential channel (gon-2) from Caenorhabditis elegans.